We begin with the raw amino-acid sequence, 171 residues long: Lipoprotein signal peptidase (171 aa).

Helical transmembrane passes span 8–28 (SFLW…YIVV), 64–84 (WQQY…VYFL), and 96–118 (SAYA…NGFV). Active-site residues include D120 and D138. Residues 133–153 (VFNIADIAICIGAGLLALDAF) form a helical membrane-spanning segment.

Belongs to the peptidase A8 family.

The protein resides in the cell inner membrane. The catalysed reaction is Release of signal peptides from bacterial membrane prolipoproteins. Hydrolyzes -Xaa-Yaa-Zaa-|-(S,diacylglyceryl)Cys-, in which Xaa is hydrophobic (preferably Leu), and Yaa (Ala or Ser) and Zaa (Gly or Ala) have small, neutral side chains.. It functions in the pathway protein modification; lipoprotein biosynthesis (signal peptide cleavage). This protein specifically catalyzes the removal of signal peptides from prolipoproteins. The polypeptide is Lipoprotein signal peptidase (Haemophilus influenzae (strain 86-028NP)).